The chain runs to 352 residues: Protein-glutamate methylesterase/protein-glutamine glutaminase (352 aa).

Residues 4 to 121 (RVLIVDDSAT…YDGIDEIQKE (118 aa)) enclose the Response regulatory domain. Position 55 is a 4-aspartylphosphate (Asp-55). Residues 159 to 351 (AQTTNKLIAI…VKIASLLSER (193 aa)) form the CheB-type methylesterase domain. Active-site residues include Ser-171, His-197, and Asp-293.

It belongs to the CheB family. In terms of processing, phosphorylated by CheA. Phosphorylation of the N-terminal regulatory domain activates the methylesterase activity.

Its subcellular location is the cytoplasm. The enzyme catalyses [protein]-L-glutamate 5-O-methyl ester + H2O = L-glutamyl-[protein] + methanol + H(+). It carries out the reaction L-glutaminyl-[protein] + H2O = L-glutamyl-[protein] + NH4(+). In terms of biological role, involved in chemotaxis. Part of a chemotaxis signal transduction system that modulates chemotaxis in response to various stimuli. Catalyzes the demethylation of specific methylglutamate residues introduced into the chemoreceptors (methyl-accepting chemotaxis proteins or MCP) by CheR. Also mediates the irreversible deamidation of specific glutamine residues to glutamic acid. The polypeptide is Protein-glutamate methylesterase/protein-glutamine glutaminase (Sulfurimonas denitrificans (strain ATCC 33889 / DSM 1251) (Thiomicrospira denitrificans (strain ATCC 33889 / DSM 1251))).